The sequence spans 252 residues: Adenosine 5'-phosphosulfate reductase (252 aa).

4 residues coordinate [4Fe-4S] cluster: C125, C126, C208, and C211. The segment at 219–252 is disordered; the sequence is DGYSREGRWSDRDKTECGLHTSPEDEDGAHAAES. Basic and acidic residues predominate over residues 221-235; sequence YSREGRWSDRDKTEC. C235 functions as the Nucleophile; cysteine thiosulfonate intermediate in the catalytic mechanism.

It belongs to the PAPS reductase family. CysH subfamily. It depends on [4Fe-4S] cluster as a cofactor.

It is found in the cytoplasm. The enzyme catalyses [thioredoxin]-disulfide + sulfite + AMP + 2 H(+) = adenosine 5'-phosphosulfate + [thioredoxin]-dithiol. It functions in the pathway sulfur metabolism; hydrogen sulfide biosynthesis; sulfite from sulfate. Its function is as follows. Catalyzes the formation of sulfite from adenosine 5'-phosphosulfate (APS) using thioredoxin as an electron donor. In Salinibacter ruber (strain DSM 13855 / M31), this protein is Adenosine 5'-phosphosulfate reductase.